Here is a 480-residue protein sequence, read N- to C-terminus: DnaJ homolog subfamily A member 3, mitochondrial (480 aa).

Arginine 58 bears the Omega-N-methylarginine; by CARM1 mark. The region spanning 93–158 is the J domain; sequence DYYQILGVPR…VKRKQYDAYG (66 aa). Lysine 134 is subject to N6-acetyllysine. The CR-type zinc-finger motif lies at 223–301; the sequence is GVNKEFTVNI…CRGAGQAKQK (79 aa). Cysteine 236 lines the Zn(2+) pocket. CXXCXGXG motif repeat units follow at residues 236–243, 253–260, 275–282, and 289–296; these read CERCNGKG, CHYCGGSG, CRRCGGRG, and CVVCRGAG. Residue arginine 238 is modified to Omega-N-methylarginine; by CARM1. Zn(2+) contacts are provided by cysteine 239, cysteine 253, cysteine 256, cysteine 275, cysteine 278, cysteine 289, and cysteine 292. Residue arginine 293 is modified to Omega-N-methylarginine; by CARM1. Serine 398 is subject to Phosphoserine. Positions 443–456 are enriched in polar residues; it reads LTSSGGSTMDSSAG. The segment at 443–471 is disordered; it reads LTSSGGSTMDSSAGSKARREAGEDEEGFL.

As to quaternary structure, interacts with JAK2, HSPA9B and IFN-gammaR2 chain. Interacts with Ras GTPase-activating protein 1 (RASA1). Isoform 2 interacts with MUSK (via the cytoplasmic domain). Tyrosine phosphorylated. In terms of tissue distribution, widely expressed with highest levels in heart, liver, lung and skeletal muscles. Also expressed in keratinocytes; expression level and distribution is altered in basal cell carcinomas.

It localises to the mitochondrion matrix. It is found in the cytoplasm. The protein resides in the cytosol. The protein localises to the postsynaptic cell membrane. Functionally, modulates apoptotic signal transduction or effector structures within the mitochondrial matrix. Affect cytochrome C release from the mitochondria and caspase 3 activation, but not caspase 8 activation. Isoform 1 increases apoptosis triggered by both TNF and the DNA-damaging agent mytomycin C; in sharp contrast, isoform 2 suppresses apoptosis. Can modulate IFN-gamma-mediated transcriptional activity. Isoform 2 may play a role in neuromuscular junction development as an effector of the MUSK signaling pathway. The chain is DnaJ homolog subfamily A member 3, mitochondrial (DNAJA3) from Homo sapiens (Human).